The primary structure comprises 315 residues: 3-chlorobenzoate-3,4-dioxygenase reductase subunit (315 aa).

1 to 103 (MVAIDQHDTY…GATTRISAPR (103 aa)) is an FMN binding site. Positions 7–109 (HDTYSVRVIS…SAPRNAFALD (103 aa)) constitute an FAD-binding FR-type domain. The 2Fe-2S ferredoxin-type domain maps to 228–315 (NEFTVNLARS…ALSPELTLDL (88 aa)). Positions 264, 269, 272, and 302 each coordinate [2Fe-2S] cluster.

Belongs to the PDR/VanB family. In terms of assembly, this dioxygenase system consists of two proteins: phthalate oxygenase and phthalate oxygenase reductase. The cofactor is FMN.

In Comamonas testosteroni (Pseudomonas testosteroni), this protein is 3-chlorobenzoate-3,4-dioxygenase reductase subunit (cbaB).